The chain runs to 379 residues: Cytochrome b (379 aa).

Helical transmembrane passes span 33-53, 77-98, 113-133, and 178-198; these read FGSLLGACLIIQVITGLFLAM, WMIRYLHANGASMFFLCLFIHV, WNVGIILLFSVMATAFMGYVL, and FFALHFILPFIISAWVMIHLL. Heme b is bound by residues His83 and His97. 2 residues coordinate heme b: His182 and His196. His201 contributes to the a ubiquinone binding site. A run of 4 helical transmembrane segments spans residues 226 to 246, 288 to 308, 320 to 340, and 347 to 367; these read TKDFLGLLLLILLLMTLALFY, LGGVVALILSILILMIIPFLQ, LSQFLFWILVADLLTLTWIGG, and FISIGQTASMLYFSLMIFIMP.

Belongs to the cytochrome b family. As to quaternary structure, the cytochrome bc1 complex contains 11 subunits: 3 respiratory subunits (MT-CYB, CYC1 and UQCRFS1), 2 core proteins (UQCRC1 and UQCRC2) and 6 low-molecular weight proteins (UQCRH/QCR6, UQCRB/QCR7, UQCRQ/QCR8, UQCR10/QCR9, UQCR11/QCR10 and a cleavage product of UQCRFS1). This cytochrome bc1 complex then forms a dimer. It depends on heme b as a cofactor.

The protein localises to the mitochondrion inner membrane. Functionally, component of the ubiquinol-cytochrome c reductase complex (complex III or cytochrome b-c1 complex) that is part of the mitochondrial respiratory chain. The b-c1 complex mediates electron transfer from ubiquinol to cytochrome c. Contributes to the generation of a proton gradient across the mitochondrial membrane that is then used for ATP synthesis. This is Cytochrome b (MT-CYB) from Lepilemur septentrionalis (Northern sportive lemur).